The sequence spans 164 residues: Sorting nexin-3 (164 aa).

Positions 1–26 (MSGKREFKSFGSTEETMFSQHHKIPS) are disordered. Residues 10–26 (FGSTEETMFSQHHKIPS) are compositionally biased toward polar residues. In terms of domain architecture, PX spans 40–163 (IEVRNPKTHV…IRFIEDDKFV (124 aa)). The a 1,2-diacyl-sn-glycero-3-phospho-(1D-myo-inositol-3-phosphate) site is built by Arg-83, Ser-85, Lys-114, Arg-120, and Arg-129.

This sequence belongs to the sorting nexin family.

It is found in the cytoplasm. The protein localises to the golgi apparatus membrane. It localises to the prevacuolar compartment membrane. Functionally, required for retention of late Golgi membrane proteins. Component of the retrieval machinery that functions by direct interaction with the cytosolic tails of certain TGN membrane proteins during the sorting/budding process at the prevacuolar compartment. Binds phosphatidylinositol 3-phosphate (PtdIns(P3)). This chain is Sorting nexin-3 (SNX3), found in Candida glabrata (strain ATCC 2001 / BCRC 20586 / JCM 3761 / NBRC 0622 / NRRL Y-65 / CBS 138) (Yeast).